Reading from the N-terminus, the 447-residue chain is Argininosuccinate synthase (447 aa).

ATP is bound by residues 17–25 and Ala-43; that span reads AFSGGLDTS. Tyr-99 serves as a coordination point for L-citrulline. Residues Gly-129 and Thr-131 each coordinate ATP. L-aspartate-binding residues include Thr-131, Asn-135, and Asp-136. Asn-135 is a binding site for L-citrulline. Residue Asp-136 participates in ATP binding. L-citrulline-binding residues include Arg-139 and Ser-192. Residue Asp-194 coordinates ATP. Positions 201, 203, and 280 each coordinate L-citrulline.

This sequence belongs to the argininosuccinate synthase family. Type 2 subfamily. Homotetramer.

It is found in the cytoplasm. The catalysed reaction is L-citrulline + L-aspartate + ATP = 2-(N(omega)-L-arginino)succinate + AMP + diphosphate + H(+). It functions in the pathway amino-acid biosynthesis; L-arginine biosynthesis; L-arginine from L-ornithine and carbamoyl phosphate: step 2/3. The chain is Argininosuccinate synthase from Salmonella paratyphi B (strain ATCC BAA-1250 / SPB7).